Consider the following 305-residue polypeptide: tRNA dimethylallyltransferase (305 aa).

ATP is bound at residue 8-15 (GPTAVGKT). Substrate is bound at residue 10–15 (TAVGKT). Residues 33-36 (DSRQ) are interaction with substrate tRNA.

The protein belongs to the IPP transferase family. Monomer. The cofactor is Mg(2+).

The catalysed reaction is adenosine(37) in tRNA + dimethylallyl diphosphate = N(6)-dimethylallyladenosine(37) in tRNA + diphosphate. In terms of biological role, catalyzes the transfer of a dimethylallyl group onto the adenine at position 37 in tRNAs that read codons beginning with uridine, leading to the formation of N6-(dimethylallyl)adenosine (i(6)A). The protein is tRNA dimethylallyltransferase of Thermotoga sp. (strain RQ2).